Reading from the N-terminus, the 357-residue chain is Protein MGF 360-14L (357 aa).

It belongs to the asfivirus MGF 360 family. As to quaternary structure, interacts with host IRF3 and TRIM21; these interactions mediates degradation of IRF3 through TRIM21 and ubiquitin-meditated proteolysis.

It is found in the host cytoplasm. Plays a role in virus cell tropism, and may be required for efficient virus replication in macrophages. Also inhibits the host cGAS/STING-mediated type I interferon production by inducing host IRF3 degradation through the proteasome pathway. This Ornithodoros (relapsing fever ticks) protein is Protein MGF 360-14L.